The chain runs to 286 residues: Polyamine aminopropyltransferase (286 aa).

The 234-residue stretch at 5–238 folds into the PABS domain; that stretch reads TMWHETLHDQ…GIMTFAWATD (234 aa). Residue Gln-33 coordinates S-methyl-5'-thioadenosine. 2 residues coordinate spermidine: His-64 and Asp-88. Residues Glu-108 and 140–141 each bind S-methyl-5'-thioadenosine; that span reads DG. Residue Asp-158 is the Proton acceptor of the active site. Position 158 to 161 (158 to 161) interacts with spermidine; the sequence is DCTD. S-methyl-5'-thioadenosine is bound at residue Pro-165.

The protein belongs to the spermidine/spermine synthase family. As to quaternary structure, homodimer or homotetramer.

It localises to the cytoplasm. It carries out the reaction S-adenosyl 3-(methylsulfanyl)propylamine + putrescine = S-methyl-5'-thioadenosine + spermidine + H(+). The protein operates within amine and polyamine biosynthesis; spermidine biosynthesis; spermidine from putrescine: step 1/1. Its function is as follows. Catalyzes the irreversible transfer of a propylamine group from the amino donor S-adenosylmethioninamine (decarboxy-AdoMet) to putrescine (1,4-diaminobutane) to yield spermidine. The sequence is that of Polyamine aminopropyltransferase from Salmonella paratyphi A (strain ATCC 9150 / SARB42).